Here is a 1274-residue protein sequence, read N- to C-terminus: Myosin-1 (1274 aa).

The segment at 1–28 (MAPSKKAGKKGAVGGFLSGASKPQKVQK) is disordered. Positions 41–721 (AGVPDMTLLS…TLFYLEGERD (681 aa)) constitute a Myosin motor domain. 134-141 (GESGAGKT) contributes to the ATP binding site. At serine 363 the chain carries Phosphoserine. Residues 410-492 (VIGVLDIYGF…AGIFATLNDA (83 aa)) form an actin-binding region. 2 IQ domains span residues 725–745 (HTMASRIQRAWRAYVRRKHEA) and 746–771 (ATKIQRFWRNQREALVYERKRDYGHQ). Residues 779-969 (RRRFSLLGMR…TIQVGSGEPP (191 aa)) enclose the TH1 domain. Disordered stretches follow at residues 951–1029 (RGDA…PVVT), 1042–1071 (ARAPPSIPGRAAAPPPPPPPPPPAGPPKEF), and 1116–1248 (PSNY…QVAQ). Over residues 957–974 (KSHTIQVGSGEPPNSLSN) the composition is skewed to polar residues. Positions 1042–1053 (ARAPPSIPGRAA) are enriched in low complexity. Pro residues-rich tracts occupy residues 1054–1067 (APPPPPPPPPPAGP) and 1126–1138 (APPPPPPPPPPSR). The 59-residue stretch at 1067–1125 (PPKEFYKALYNFTGQEGEMNLVKGEEVEVKEKDDNGWWMVVKNGQEGWAPSNYLKKVEQ) folds into the SH3 domain. 2 stretches are compositionally biased toward low complexity: residues 1139–1157 (PVAARPPAASSAPTAPAVT) and 1170–1226 (AASA…IGGK).

This sequence belongs to the TRAFAC class myosin-kinesin ATPase superfamily. Myosin family. Phosphorylation of the TEDS site (Ser-363) is required for the polarization of the actin cytoskeleton. Phosphorylation probably activates the myosin-I ATPase activity.

It is found in the cytoplasm. Its subcellular location is the cytoskeleton. The protein resides in the actin patch. Type-I myosin implicated in the organization of the actin cytoskeleton. Required for proper actin cytoskeleton polarization. At the cell cortex, assembles in patch-like structures together with proteins from the actin-polymerizing machinery and promotes actin assembly. Functions as actin nucleation-promoting factor (NPF) for the Arp2/3 complex. The protein is Myosin-1 (MYO1) of Cryptococcus neoformans var. neoformans serotype D (strain B-3501A) (Filobasidiella neoformans).